The following is a 125-amino-acid chain: Alpha-endosulfine (125 aa).

Residues 1 to 37 (MSDKYIGDSHLEETGEEKQDSQEKEAVTPEKAEEQKL) are compositionally biased toward basic and acidic residues. The tract at residues 1 to 53 (MSDKYIGDSHLEETGEEKQDSQEKEAVTPEKAEEQKLKAKYPNLGQKPGGSDF) is disordered. A Phosphothreonine; by CDK2 modification is found at T28. S67 bears the Phosphoserine; by GWL mark. The disordered stretch occupies residues 81 to 108 (QLPCAGPDKNLVTGDHIPTPQDLPQRKS). T99 carries the post-translational modification Phosphothreonine; by CDK2. S109 carries the post-translational modification Phosphoserine; by PKA.

The protein belongs to the endosulfine family. Post-translationally, phosphorylation at Ser-67 by gwl during mitosis is essential for interaction with ppp2r2d (PR55-delta) and subsequent inactivation of PP2A.

It localises to the cytoplasm. Functionally, protein phosphatase inhibitor that specifically inhibits protein phosphatase 2A (PP2A) during mitosis. When phosphorylated at Ser-67 during mitosis, specifically interacts with ppp2r2d (PR55-delta) and inhibits its activity, leading to inactivation of PP2A, an essential condition to keep cyclin-B1-CDK1 activity high during M phase. This chain is Alpha-endosulfine (ensa), found in Xenopus tropicalis (Western clawed frog).